The following is a 628-amino-acid chain: MSSEDLQDHHEIGNEVIKKKGVYTKKKCQDCFFLILFLLFWAGMIVVAAFGVKNGKPDRIVKGTDQYGNICGVNNIEQGILNETQARDTTNEPYVYFIYYPDLIGINYRVICIEECPNSTYTDLNDPNQLICDYGTVPATNQISPNGTCMGKIKSKLIFNRCIPDVTNTSVVLNSIVDEIYQFVNNQLTSDLSVEILTDLTNSWRYLIYGALIAMGLGLTWIFLLRFFAGFITWLTVFAAYACLGLLTAQVYFQWQDSKDAYENTIPSQRLVMQEKNILALKVIFIILCVVCGIFALILLALFSRIRIAIRIIKECSRAIGIMPSIFFFPIFIFLLLCGFTVYWVYIGVYLATAGSPTYDDQYRFTGYEADSKLQKIQIYHFFGYLWTFAFILALNQTTIAGAISSWYWVQDKKDTPFFPVWSSFFRVIRYHLGSIALGSLILAIVQFIRWVLRFLEKKFKGKEAYLARFIVRCLNCIFGCFERFIKFLDKNAYIMVSIYGYSFCQGAKRGFQLVLTNILRVAAVNLVSSFLMFLGRVFITAATVGISLYLLKEHENLSFYIIPVILIGFIAFAISTGFMSVYDMSIDTMLLCFCEDCERNDGSPERPYYMSKSLRKFVDGKGRSKCC.

Residues 1–31 are Cytoplasmic-facing; it reads MSSEDLQDHHEIGNEVIKKKGVYTKKKCQDC. Residues 32-52 traverse the membrane as a helical segment; that stretch reads FFLILFLLFWAGMIVVAAFGV. The Extracellular portion of the chain corresponds to 53-204; sequence KNGKPDRIVK…EILTDLTNSW (152 aa). Asn82, Asn118, Asn146, and Asn168 each carry an N-linked (GlcNAc...) asparagine glycan. A helical membrane pass occupies residues 205–225; that stretch reads RYLIYGALIAMGLGLTWIFLL. Residue Arg226 is a topological domain, cytoplasmic. The helical transmembrane segment at 227–247 threads the bilayer; sequence FFAGFITWLTVFAAYACLGLL. Topologically, residues 248 to 282 are extracellular; the sequence is TAQVYFQWQDSKDAYENTIPSQRLVMQEKNILALK. The helical transmembrane segment at 283–303 threads the bilayer; it reads VIFIILCVVCGIFALILLALF. The Cytoplasmic portion of the chain corresponds to 304 to 319; that stretch reads SRIRIAIRIIKECSRA. The chain crosses the membrane as a helical span at residues 320–340; sequence IGIMPSIFFFPIFIFLLLCGF. Over 341-381 the chain is Extracellular; it reads TVYWVYIGVYLATAGSPTYDDQYRFTGYEADSKLQKIQIYH. A helical membrane pass occupies residues 382–402; sequence FFGYLWTFAFILALNQTTIAG. Over 403–432 the chain is Cytoplasmic; sequence AISSWYWVQDKKDTPFFPVWSSFFRVIRYH. The chain crosses the membrane as a helical span at residues 433 to 453; it reads LGSIALGSLILAIVQFIRWVL. The Extracellular portion of the chain corresponds to 454–530; that stretch reads RFLEKKFKGK…RVAAVNLVSS (77 aa). A helical membrane pass occupies residues 531–551; sequence FLMFLGRVFITAATVGISLYL. Residues 552-559 are Cytoplasmic-facing; that stretch reads LKEHENLS. Residues 560–580 traverse the membrane as a helical segment; that stretch reads FYIIPVILIGFIAFAISTGFM. Residues 581–628 lie on the Extracellular side of the membrane; sequence SVYDMSIDTMLLCFCEDCERNDGSPERPYYMSKSLRKFVDGKGRSKCC.

It belongs to the CTL (choline transporter-like) family.

Its subcellular location is the cell membrane. It is found in the mitochondrion outer membrane. It catalyses the reaction choline(out) + n H(+)(in) = choline(in) + n H(+)(out). The enzyme catalyses ethanolamine(out) + n H(+)(in) = ethanolamine(in) + n H(+)(out). In terms of biological role, choline/H+ antiporter, mainly in mitochodria. Also acts as a low-affinity ethanolamine/H+ antiporter, regulating the supply of extracellular ethanolamine (Etn) for the CDP-Etn pathway, redistribute intracellular Etn and balance the CDP-Cho and CDP-Etn arms of the Kennedy pathway. This is Choline transporter-like protein 2 (slc44a2) from Dictyostelium discoideum (Social amoeba).